Reading from the N-terminus, the 226-residue chain is Ribonuclease 3 (226 aa).

Residues 6-128 (FNKLQKKMGY…IIGGIFLDSN (123 aa)) form the RNase III domain. Position 41 (Glu-41) interacts with Mg(2+). The active site involves Asp-45. Asn-114 and Glu-117 together coordinate Mg(2+). Glu-117 is an active-site residue. The 71-residue stretch at 155 to 225 (DPKTRLQEYL…AKQALLLFNI (71 aa)) folds into the DRBM domain.

This sequence belongs to the ribonuclease III family. As to quaternary structure, homodimer. The cofactor is Mg(2+).

It localises to the cytoplasm. It catalyses the reaction Endonucleolytic cleavage to 5'-phosphomonoester.. Its function is as follows. Digests double-stranded RNA. Involved in the processing of primary rRNA transcript to yield the immediate precursors to the large and small rRNAs (23S and 16S). Processes some mRNAs, and tRNAs when they are encoded in the rRNA operon. Processes pre-crRNA and tracrRNA of type II CRISPR loci if present in the organism. The chain is Ribonuclease 3 from Wigglesworthia glossinidia brevipalpis.